The chain runs to 190 residues: Mitochondrial inner membrane protease subunit 1 (190 aa).

Active-site residues include Ser-40 and Lys-84.

The protein belongs to the peptidase S26 family. IMP1 subfamily. In terms of assembly, component of the mitochondrial inner membrane peptidase (IMP) complex which at least consists of IMP1, IMP2 and SOM1.

The protein resides in the mitochondrion inner membrane. In terms of biological role, catalytic component of the mitochondrial inner membrane peptidase (IMP) complex. IMP catalyzes the removal of signal peptides required for the targeting of proteins from the mitochondrial matrix, across the inner membrane, into the inter-membrane space. The two catalytic IMP subunits seem to have non-overlapping substrate specificities. IMP1 substrates include nuclear encoded CYB2, mitochondrially encoded COX2, NADH-cytochrome b5 reductase and GUT2. This Saccharomyces cerevisiae (strain ATCC 204508 / S288c) (Baker's yeast) protein is Mitochondrial inner membrane protease subunit 1 (IMP1).